The chain runs to 4427 residues: Dynein axonemal heavy chain 2 (4427 aa).

A disordered region spans residues 1–73 (MSSKAEKKQR…AQSEESVEPE (73 aa)). Residues 1 to 1764 (MSSKAEKKQR…VIRQTNTQFQ (1764 aa)) form a stem region. Residues 14 to 23 (RGSSQASWSG) are compositionally biased toward polar residues. A compositionally biased stretch (basic and acidic residues) spans 50 to 59 (LPKEEPEPRL). One copy of the TPR 1 repeat lies at 1404-1439 (EDNQVALSTMKASRFVKAFEKDVDHWERCLSLILEV). AAA stretches follow at residues 1765-1986 (YNYE…LLRY), 2046-2273 (ETVE…DNCK), 2378-2625 (RYPP…VFQG), and 2722-2974 (EYNL…LRRH). Residues 1803-1810 (GPAGTGKT), 2084-2091 (GCTGSGKT), and 2416-2423 (GPVGTGKT) each bind ATP. The TPR 2 repeat unit spans residues 2721–2754 (NEYNLSPSVVPMQLVLFREAIEHITRIVRVIGQP). Residue 2762 to 2769 (GIGGSGRQ) coordinates ATP. The interval 2989-3272 (YKKLLGEKRQ…EELRKKSEEM (284 aa)) is stalk. Residues 3012 to 3049 (FKIDETREKVQVMSLELEDAKKKVAEFQKQCEEYLVII) adopt a coiled-coil conformation. One copy of the TPR 3 repeat lies at 3072-3105 (VEEIKCQALADNAQKDLEEALPALEEAMRALESL). Coiled coils occupy residues 3216–3304 (KRIR…EEDL) and 3523–3567 (VRKE…GSLL). AAA regions lie at residues 3358–3588 (LCNP…EVTE) and 3804–4023 (VTSF…LLSL). TPR repeat units lie at residues 4072–4104 (STPF…LLPG) and 4105–4140 (MDPP…QPQI).

Belongs to the dynein heavy chain family. Part of the axonemal inner dynein arm complex that consists of at least two heavy chains and a number of intermediate and light chains. Interacts with DNAI4. Expressed primarily in trachea and testis, 2 tissues containing axonemal structures. Also expressed in lung. Expressed in spermatozoa (at protein level).

It localises to the cytoplasm. It is found in the cytoskeleton. The protein resides in the cilium axoneme. The protein localises to the flagellum axoneme. Its function is as follows. As part of the axonemal inner dynein arm complex plays a central role in ciliary beat. Expressed in sperm flagellum, it is required for sperm motility. Dyneins are microtubule-based molecular motors possessing ATPase activities that can convert the chemical energy of ATP into relative sliding between adjacent microtubule doublets to generate ciliary bending. The chain is Dynein axonemal heavy chain 2 from Homo sapiens (Human).